The primary structure comprises 1041 residues: Sarcoplasmic/endoplasmic reticulum calcium ATPase 2 (1041 aa).

Over M1–T48 the chain is Cytoplasmic. Residues L49–A69 traverse the membrane as a helical segment. The Lumenal portion of the chain corresponds to C70–V89. A helical transmembrane segment spans residues E90–R110. Topologically, residues N111–L253 are cytoplasmic. The helical transmembrane segment at D254 to I273 threads the bilayer. At I274–Y295 the chain is on the lumenal side. A helical transmembrane segment spans residues F296–A313. Ca(2+) contacts are provided by V304, A305, I307, and E309. Residues V314–M756 lie on the Cytoplasmic side of the membrane. D351 serves as the catalytic 4-aspartylphosphate intermediate. D351 and T353 together coordinate Mg(2+). T353, E442, R489, K514, R559, T624, G625, D626, R677, and K683 together coordinate ATP. D702 is a Mg(2+) binding site. N705 contributes to the ATP binding site. A helical membrane pass occupies residues K757 to L776. The Ca(2+) site is built by N767 and E770. Residues T777–L786 are Lumenal-facing. The helical transmembrane segment at I787–G807 threads the bilayer. The interval I787–G807 is interaction with PLN. 3 residues coordinate Ca(2+): N795, T798, and D799. The Cytoplasmic segment spans residues F808–L827. Residues I828–A850 traverse the membrane as a helical segment. Topologically, residues A851 to M896 are lumenal. A disulfide bond links C875 and C887. A helical transmembrane segment spans residues T897–S916. E907 is a Ca(2+) binding site. Topologically, residues E917–N929 are cytoplasmic. The chain crosses the membrane as a helical span at residues I930–Y948. Residues W931–L942 form an interaction with PLN region. Residues V949–V963 lie on the Lumenal side of the membrane. A helical transmembrane segment spans residues T964–K984. At Y985–W1041 the chain is on the cytoplasmic side.

It belongs to the cation transport ATPase (P-type) (TC 3.A.3) family. Type IIA subfamily. In terms of assembly, interacts with sarcolipin (SLN). Interacts with phospholamban (PLN). Interacts with myoregulin (MRLN). Interacts with DWORF. Interacts with TMX2. Requires Mg(2+) as cofactor. As to expression, only isoform 2 is detected in heart, while both isoforms are expressed in brain, with isoform 2 being predominant.

The protein resides in the endoplasmic reticulum membrane. It localises to the sarcoplasmic reticulum membrane. It carries out the reaction Ca(2+)(in) + ATP + H2O = Ca(2+)(out) + ADP + phosphate + H(+). With respect to regulation, reversibly inhibited by phospholamban (PLN) at low calcium concentrations. Inhibited by sarcolipin (SLN) and myoregulin (MRLN). Enhanced by DWORF; DWORF increases activity by displacing sarcolipin (SLN), phospholamban (PLN) and myoregulin (MRLN). In terms of biological role, this magnesium-dependent enzyme catalyzes the hydrolysis of ATP coupled with the translocation of calcium from the cytosol to the sarcoplasmic reticulum lumen. Isoform SERCA2A is involved in the regulation of the contraction/relaxation cycle. May act as a regulator of TNFSF11-mediated Ca(2+) signaling during osteoclastogenesis. The polypeptide is Sarcoplasmic/endoplasmic reticulum calcium ATPase 2 (ATP2A2) (Gallus gallus (Chicken)).